Here is a 36-residue protein sequence, read N- to C-terminus: Photosystem II reaction center protein M (36 aa).

Residues 5 to 25 traverse the membrane as a helical segment; that stretch reads ILGVIAVALFILIPTSFLLIL.

Belongs to the PsbM family. PSII is composed of 1 copy each of membrane proteins PsbA, PsbB, PsbC, PsbD, PsbE, PsbF, PsbH, PsbI, PsbJ, PsbK, PsbL, PsbM, PsbT, PsbY, PsbZ, Psb30/Ycf12, at least 3 peripheral proteins of the oxygen-evolving complex and a large number of cofactors. It forms dimeric complexes.

The protein localises to the plastid. The protein resides in the chloroplast thylakoid membrane. Its function is as follows. One of the components of the core complex of photosystem II (PSII). PSII is a light-driven water:plastoquinone oxidoreductase that uses light energy to abstract electrons from H(2)O, generating O(2) and a proton gradient subsequently used for ATP formation. It consists of a core antenna complex that captures photons, and an electron transfer chain that converts photonic excitation into a charge separation. This subunit is found at the monomer-monomer interface. The sequence is that of Photosystem II reaction center protein M from Bigelowiella natans (Pedinomonas minutissima).